We begin with the raw amino-acid sequence, 295 residues long: UDP-3-O-acyl-N-acetylglucosamine deacetylase (295 aa).

Zn(2+) contacts are provided by histidine 75, histidine 232, and aspartate 236. Residue histidine 259 is the Proton donor of the active site.

This sequence belongs to the LpxC family. Requires Zn(2+) as cofactor.

It carries out the reaction a UDP-3-O-[(3R)-3-hydroxyacyl]-N-acetyl-alpha-D-glucosamine + H2O = a UDP-3-O-[(3R)-3-hydroxyacyl]-alpha-D-glucosamine + acetate. It participates in glycolipid biosynthesis; lipid IV(A) biosynthesis; lipid IV(A) from (3R)-3-hydroxytetradecanoyl-[acyl-carrier-protein] and UDP-N-acetyl-alpha-D-glucosamine: step 2/6. Functionally, catalyzes the hydrolysis of UDP-3-O-myristoyl-N-acetylglucosamine to form UDP-3-O-myristoylglucosamine and acetate, the committed step in lipid A biosynthesis. In Helicobacter pylori (strain ATCC 700392 / 26695) (Campylobacter pylori), this protein is UDP-3-O-acyl-N-acetylglucosamine deacetylase.